The sequence spans 392 residues: NADH-quinone oxidoreductase subunit D (392 aa).

It belongs to the complex I 49 kDa subunit family. NDH-1 is composed of 14 different subunits. Subunits NuoB, C, D, E, F, and G constitute the peripheral sector of the complex.

Its subcellular location is the cell inner membrane. It carries out the reaction a quinone + NADH + 5 H(+)(in) = a quinol + NAD(+) + 4 H(+)(out). In terms of biological role, NDH-1 shuttles electrons from NADH, via FMN and iron-sulfur (Fe-S) centers, to quinones in the respiratory chain. The immediate electron acceptor for the enzyme in this species is believed to be ubiquinone. Couples the redox reaction to proton translocation (for every two electrons transferred, four hydrogen ions are translocated across the cytoplasmic membrane), and thus conserves the redox energy in a proton gradient. The protein is NADH-quinone oxidoreductase subunit D of Parvibaculum lavamentivorans (strain DS-1 / DSM 13023 / NCIMB 13966).